We begin with the raw amino-acid sequence, 129 residues long: Small ribosomal subunit protein uS11c (129 aa).

This sequence belongs to the universal ribosomal protein uS11 family. Part of the 30S ribosomal subunit.

The protein localises to the plastid. It localises to the chloroplast. This is Small ribosomal subunit protein uS11c from Oltmannsiellopsis viridis (Marine flagellate).